A 449-amino-acid polypeptide reads, in one-letter code: 23S rRNA (uracil(1939)-C(5))-methyltransferase RlmD (449 aa).

In terms of domain architecture, TRAM spans 1-66 (MGRSRYHNKL…AKFDEAKVVE (66 aa)). [4Fe-4S] cluster is bound by residues cysteine 79, cysteine 85, cysteine 88, and cysteine 169. Residues glutamine 280, phenylalanine 309, asparagine 314, glutamate 330, asparagine 357, and aspartate 379 each contribute to the S-adenosyl-L-methionine site. The active-site Nucleophile is cysteine 405.

Belongs to the class I-like SAM-binding methyltransferase superfamily. RNA M5U methyltransferase family. RlmD subfamily.

The enzyme catalyses uridine(1939) in 23S rRNA + S-adenosyl-L-methionine = 5-methyluridine(1939) in 23S rRNA + S-adenosyl-L-homocysteine + H(+). Its function is as follows. Catalyzes the formation of 5-methyl-uridine at position 1939 (m5U1939) in 23S rRNA. The chain is 23S rRNA (uracil(1939)-C(5))-methyltransferase RlmD from Francisella tularensis subsp. holarctica (strain LVS).